A 334-amino-acid chain; its full sequence is Probable quinone oxidoreductase (334 aa).

It belongs to the zinc-containing alcohol dehydrogenase family. Quinone oxidoreductase subfamily.

The catalysed reaction is 2 a quinone + NADPH + H(+) = 2 a 1,4-benzosemiquinone + NADP(+). This chain is Probable quinone oxidoreductase (ZTA1), found in Saccharomyces cerevisiae (strain ATCC 204508 / S288c) (Baker's yeast).